Consider the following 72-residue polypeptide: Translation initiation factor IF-1 (72 aa).

In terms of domain architecture, S1-like spans 1–72 (MAKEDNIEMQ…SKGRIVFRSR (72 aa)).

It belongs to the IF-1 family. In terms of assembly, component of the 30S ribosomal translation pre-initiation complex which assembles on the 30S ribosome in the order IF-2 and IF-3, IF-1 and N-formylmethionyl-tRNA(fMet); mRNA recruitment can occur at any time during PIC assembly.

The protein localises to the cytoplasm. In terms of biological role, one of the essential components for the initiation of protein synthesis. Stabilizes the binding of IF-2 and IF-3 on the 30S subunit to which N-formylmethionyl-tRNA(fMet) subsequently binds. Helps modulate mRNA selection, yielding the 30S pre-initiation complex (PIC). Upon addition of the 50S ribosomal subunit IF-1, IF-2 and IF-3 are released leaving the mature 70S translation initiation complex. The polypeptide is Translation initiation factor IF-1 (Klebsiella pneumoniae subsp. pneumoniae (strain ATCC 700721 / MGH 78578)).